Consider the following 901-residue polypeptide: Clathrin coat assembly protein AP180 (901 aa).

One can recognise an ENTH domain in the interval 14–145 (QYSVTGSAVA…FSYRQMAFDF (132 aa)). Disordered regions lie at residues 285-326 (LEGK…DTSP), 397-424 (PISD…STTT), 497-522 (PETS…PSPA), and 573-606 (AAAP…PESS). Residues Ser296, Ser300, and Ser306 each carry the phosphoserine modification. Residues 302–324 (LSKSSPATTVTSPNSTPAKTIDT) show a composition bias toward polar residues. Residue Thr310 is glycosylated (O-linked (GlcNAc) threonine). Ser313 bears the Phosphoserine mark. Phosphothreonine is present on Thr317. Composition is skewed to low complexity over residues 410 to 424 (TTTT…STTT) and 500 to 511 (SAPVVTPTASTA). A compositionally biased stretch (pro residues) spans 512–522 (PPVPATAPSPA). 5 positions are modified to phosphoserine: Ser594, Ser600, Ser621, Ser627, and Ser761. 2 disordered regions span residues 803-845 (SAGV…GMTM) and 857-901 (MMRP…KDFL). A compositionally biased stretch (low complexity) spans 835 to 845 (GMPPSGTGMTM). Arg859 carries the post-translational modification Asymmetric dimethylarginine; alternate. Arg859 carries the omega-N-methylarginine; alternate modification. The span at 870-882 (TQLSPSPTPATQS) shows a compositional bias: polar residues. A compositionally biased stretch (basic and acidic residues) spans 887–901 (PAKDPLADLNIKDFL).

Belongs to the PICALM/SNAP91 family. Binds AP2A2. Interacts with AP2B1; clathrin competes with SNAP91. In terms of processing, thr-310 can be modified by the addition of N-acetylglucosamine which can be further phosphorylated. There is no evidence for direct Thr-310 phosphorylation. In terms of tissue distribution, brain. Associated with the synapses.

Its subcellular location is the cell membrane. The protein resides in the membrane. The protein localises to the coated pit. Adaptins are components of the adaptor complexes which link clathrin to receptors in coated vesicles. Clathrin-associated protein complexes are believed to interact with the cytoplasmic tails of membrane proteins, leading to their selection and concentration. Binding of AP180 to clathrin triskelia induces their assembly into 60-70 nm coats. The chain is Clathrin coat assembly protein AP180 (Snap91) from Mus musculus (Mouse).